A 64-amino-acid chain; its full sequence is Large ribosomal subunit protein bL28 (64 aa).

A disordered region spans residues 1-27; the sequence is MAKRDQLTGKGPLSGNTRSHAMNHSKR.

It belongs to the bacterial ribosomal protein bL28 family.

The sequence is that of Large ribosomal subunit protein bL28 from Ureaplasma parvum serovar 3 (strain ATCC 27815 / 27 / NCTC 11736).